Here is a 450-residue protein sequence, read N- to C-terminus: Glucose-6-phosphate isomerase (450 aa).

T39 is subject to Phosphothreonine. E291 functions as the Proton donor in the catalytic mechanism. Catalysis depends on residues H312 and K426.

This sequence belongs to the GPI family.

It is found in the cytoplasm. The enzyme catalyses alpha-D-glucose 6-phosphate = beta-D-fructose 6-phosphate. It participates in carbohydrate biosynthesis; gluconeogenesis. It functions in the pathway carbohydrate degradation; glycolysis; D-glyceraldehyde 3-phosphate and glycerone phosphate from D-glucose: step 2/4. Catalyzes the reversible isomerization of glucose-6-phosphate to fructose-6-phosphate. In Bacillus cereus (strain G9842), this protein is Glucose-6-phosphate isomerase.